Here is a 400-residue protein sequence, read N- to C-terminus: Argininosuccinate synthase (400 aa).

Residue 8–16 (AYSGGLDTS) participates in ATP binding. L-citrulline is bound by residues tyrosine 87 and serine 92. Residue glycine 117 participates in ATP binding. L-aspartate is bound by residues threonine 119, asparagine 123, and aspartate 124. L-citrulline is bound at residue asparagine 123. 4 residues coordinate L-citrulline: arginine 127, serine 175, glutamate 259, and tyrosine 271.

Belongs to the argininosuccinate synthase family. Type 1 subfamily. Homotetramer.

It is found in the cytoplasm. The enzyme catalyses L-citrulline + L-aspartate + ATP = 2-(N(omega)-L-arginino)succinate + AMP + diphosphate + H(+). It participates in amino-acid biosynthesis; L-arginine biosynthesis; L-arginine from L-ornithine and carbamoyl phosphate: step 2/3. This Parafrankia sp. (strain EAN1pec) protein is Argininosuccinate synthase.